The sequence spans 281 residues: Polyamine aminopropyltransferase (281 aa).

A PABS domain is found at 2-236 (DLWLKEGQIS…GYWSFTIGSK (235 aa)). Position 31 (Gln-31) interacts with S-methyl-5'-thioadenosine. Positions 62 and 86 each coordinate spermidine. S-methyl-5'-thioadenosine contacts are provided by residues Glu-106 and 138–139 (DG). The active-site Proton acceptor is Asp-156. 156–159 (DSTD) provides a ligand contact to spermidine.

This sequence belongs to the spermidine/spermine synthase family. In terms of assembly, homodimer or homotetramer.

Its subcellular location is the cytoplasm. It catalyses the reaction S-adenosyl 3-(methylsulfanyl)propylamine + putrescine = S-methyl-5'-thioadenosine + spermidine + H(+). It functions in the pathway amine and polyamine biosynthesis; spermidine biosynthesis; spermidine from putrescine: step 1/1. Functionally, catalyzes the irreversible transfer of a propylamine group from the amino donor S-adenosylmethioninamine (decarboxy-AdoMet) to putrescine (1,4-diaminobutane) to yield spermidine. The protein is Polyamine aminopropyltransferase of Clostridium tetani (strain Massachusetts / E88).